We begin with the raw amino-acid sequence, 151 residues long: Large ribosomal subunit protein bL9 (151 aa).

This sequence belongs to the bacterial ribosomal protein bL9 family.

Its function is as follows. Binds to the 23S rRNA. The polypeptide is Large ribosomal subunit protein bL9 (Bordetella petrii (strain ATCC BAA-461 / DSM 12804 / CCUG 43448)).